Here is a 458-residue protein sequence, read N- to C-terminus: tRNA modification GTPase MnmE (458 aa).

Arg28, Glu85, and Lys124 together coordinate (6S)-5-formyl-5,6,7,8-tetrahydrofolate. Residues 220 to 381 (GMNVVIAGRP…LKEHLKAVMG (162 aa)) enclose the TrmE-type G domain. A K(+)-binding site is contributed by Asn230. GTP contacts are provided by residues 230–235 (NAGKSS), 249–255 (TDIEGTT), and 274–277 (DTAG). Ser234 serves as a coordination point for Mg(2+). K(+) is bound by residues Thr249, Ile251, and Thr254. Thr255 contributes to the Mg(2+) binding site. Lys458 lines the (6S)-5-formyl-5,6,7,8-tetrahydrofolate pocket.

The protein belongs to the TRAFAC class TrmE-Era-EngA-EngB-Septin-like GTPase superfamily. TrmE GTPase family. In terms of assembly, homodimer. Heterotetramer of two MnmE and two MnmG subunits. The cofactor is K(+).

Its subcellular location is the cytoplasm. Its function is as follows. Exhibits a very high intrinsic GTPase hydrolysis rate. Involved in the addition of a carboxymethylaminomethyl (cmnm) group at the wobble position (U34) of certain tRNAs, forming tRNA-cmnm(5)s(2)U34. The polypeptide is tRNA modification GTPase MnmE (Chromohalobacter salexigens (strain ATCC BAA-138 / DSM 3043 / CIP 106854 / NCIMB 13768 / 1H11)).